Here is a 156-residue protein sequence, read N- to C-terminus: Arginine repressor (156 aa).

This sequence belongs to the ArgR family.

Its subcellular location is the cytoplasm. Its pathway is amino-acid biosynthesis; L-arginine biosynthesis [regulation]. Regulates arginine biosynthesis genes. This chain is Arginine repressor, found in Citrobacter koseri (strain ATCC BAA-895 / CDC 4225-83 / SGSC4696).